The following is a 183-amino-acid chain: Ribulose bisphosphate carboxylase small subunit, chloroplastic 3 (183 aa).

The transit peptide at 1-57 directs the protein to the chloroplast; the sequence is MASSLMSNAATTMAAATTTAQANMVAPFNGLKSVSAFPVTRKNNDITSVASNGGRVQ.

Belongs to the RuBisCO small chain family. In terms of assembly, heterohexadecamer of 8 large and 8 small subunits.

The protein localises to the plastid. It is found in the chloroplast. Functionally, ruBisCO catalyzes two reactions: the carboxylation of D-ribulose 1,5-bisphosphate, the primary event in carbon dioxide fixation, as well as the oxidative fragmentation of the pentose substrate. Both reactions occur simultaneously and in competition at the same active site. Although the small subunit is not catalytic it is essential for maximal activity. The sequence is that of Ribulose bisphosphate carboxylase small subunit, chloroplastic 3 from Mesembryanthemum crystallinum (Common ice plant).